Reading from the N-terminus, the 127-residue chain is Small ribosomal subunit protein uS11 (127 aa).

Belongs to the universal ribosomal protein uS11 family. In terms of assembly, part of the 30S ribosomal subunit. Interacts with proteins S7 and S18. Binds to IF-3.

Functionally, located on the platform of the 30S subunit, it bridges several disparate RNA helices of the 16S rRNA. Forms part of the Shine-Dalgarno cleft in the 70S ribosome. In Prosthecochloris aestuarii (strain DSM 271 / SK 413), this protein is Small ribosomal subunit protein uS11.